The sequence spans 102 residues: UPF0058 protein MTH_224 (102 aa).

The protein belongs to the UPF0058 family.

The sequence is that of UPF0058 protein MTH_224 from Methanothermobacter thermautotrophicus (strain ATCC 29096 / DSM 1053 / JCM 10044 / NBRC 100330 / Delta H) (Methanobacterium thermoautotrophicum).